A 454-amino-acid polypeptide reads, in one-letter code: Kynurenine 3-monooxygenase (454 aa).

It belongs to the aromatic-ring hydroxylase family. KMO subfamily. Requires FAD as cofactor.

It catalyses the reaction L-kynurenine + NADPH + O2 + H(+) = 3-hydroxy-L-kynurenine + NADP(+) + H2O. Its pathway is cofactor biosynthesis; NAD(+) biosynthesis; quinolinate from L-kynurenine: step 1/3. Catalyzes the hydroxylation of L-kynurenine (L-Kyn) to form 3-hydroxy-L-kynurenine (L-3OHKyn). Required for synthesis of quinolinic acid. The sequence is that of Kynurenine 3-monooxygenase from Salinispora arenicola (strain CNS-205).